The primary structure comprises 78 residues: MVPIVGLIAKSAVNTPRLLYRYLFRCCDRLPEDAKGHYKHHVRQGFNSHEDETDPERIQQIIKKALEDADWILNKVRS.

It belongs to the complex I LYR family. LYRM9 subfamily.

In Branchiostoma floridae (Florida lancelet), this protein is LYR motif-containing protein 9 (LYRM9).